Reading from the N-terminus, the 194-residue chain is 3-isopropylmalate dehydratase small subunit (194 aa).

The protein belongs to the LeuD family. LeuD type 1 subfamily. In terms of assembly, heterodimer of LeuC and LeuD.

It catalyses the reaction (2R,3S)-3-isopropylmalate = (2S)-2-isopropylmalate. It functions in the pathway amino-acid biosynthesis; L-leucine biosynthesis; L-leucine from 3-methyl-2-oxobutanoate: step 2/4. Its function is as follows. Catalyzes the isomerization between 2-isopropylmalate and 3-isopropylmalate, via the formation of 2-isopropylmaleate. The sequence is that of 3-isopropylmalate dehydratase small subunit from Limosilactobacillus fermentum (strain NBRC 3956 / LMG 18251) (Lactobacillus fermentum).